Here is a 344-residue protein sequence, read N- to C-terminus: Phosphoribosylformylglycinamidine cyclo-ligase (344 aa).

It belongs to the AIR synthase family.

The protein resides in the cytoplasm. It catalyses the reaction 2-formamido-N(1)-(5-O-phospho-beta-D-ribosyl)acetamidine + ATP = 5-amino-1-(5-phospho-beta-D-ribosyl)imidazole + ADP + phosphate + H(+). It functions in the pathway purine metabolism; IMP biosynthesis via de novo pathway; 5-amino-1-(5-phospho-D-ribosyl)imidazole from N(2)-formyl-N(1)-(5-phospho-D-ribosyl)glycinamide: step 2/2. In Haemophilus influenzae (strain PittGG), this protein is Phosphoribosylformylglycinamidine cyclo-ligase.